A 551-amino-acid polypeptide reads, in one-letter code: Adenine deaminase (551 aa).

The protein belongs to the metallo-dependent hydrolases superfamily. Adenine deaminase family. It depends on Mn(2+) as a cofactor.

The catalysed reaction is adenine + H2O + H(+) = hypoxanthine + NH4(+). The sequence is that of Adenine deaminase from Methanosarcina barkeri (strain Fusaro / DSM 804).